Here is a 434-residue protein sequence, read N- to C-terminus: Adenylosuccinate synthetase (434 aa).

Residues 22-28 (GDEGKGK) and 50-52 (GHT) each bind GTP. The Proton acceptor role is filled by aspartate 23. Mg(2+) is bound by residues aspartate 23 and glycine 50. Residues 23–26 (DEGK), 48–51 (NAGH), threonine 139, arginine 153, glutamine 234, threonine 249, and arginine 313 contribute to the IMP site. Residue histidine 51 is the Proton donor of the active site. 309–315 (ATTGRKR) is a substrate binding site. GTP is bound by residues arginine 315, 341-343 (KLD), and 423-425 (SVG).

It belongs to the adenylosuccinate synthetase family. Homodimer. Mg(2+) serves as cofactor.

It is found in the cytoplasm. It carries out the reaction IMP + L-aspartate + GTP = N(6)-(1,2-dicarboxyethyl)-AMP + GDP + phosphate + 2 H(+). Its pathway is purine metabolism; AMP biosynthesis via de novo pathway; AMP from IMP: step 1/2. Plays an important role in the de novo pathway of purine nucleotide biosynthesis. Catalyzes the first committed step in the biosynthesis of AMP from IMP. The chain is Adenylosuccinate synthetase from Chlorobium chlorochromatii (strain CaD3).